We begin with the raw amino-acid sequence, 235 residues long: Ribonuclease PH (235 aa).

Phosphate contacts are provided by residues R86 and 124-126 (GTR).

It belongs to the RNase PH family. Homohexameric ring arranged as a trimer of dimers.

The catalysed reaction is tRNA(n+1) + phosphate = tRNA(n) + a ribonucleoside 5'-diphosphate. Functionally, phosphorolytic 3'-5' exoribonuclease that plays an important role in tRNA 3'-end maturation. Removes nucleotide residues following the 3'-CCA terminus of tRNAs; can also add nucleotides to the ends of RNA molecules by using nucleoside diphosphates as substrates, but this may not be physiologically important. Probably plays a role in initiation of 16S rRNA degradation (leading to ribosome degradation) during starvation. This Francisella philomiragia subsp. philomiragia (strain ATCC 25017 / CCUG 19701 / FSC 153 / O#319-036) protein is Ribonuclease PH.